The sequence spans 158 residues: Cyclic pyranopterin monophosphate synthase (158 aa).

Substrate contacts are provided by residues 75–77 (LCH) and 113–114 (ME). Residue aspartate 128 is part of the active site.

Belongs to the MoaC family. Homohexamer; trimer of dimers.

It carries out the reaction (8S)-3',8-cyclo-7,8-dihydroguanosine 5'-triphosphate = cyclic pyranopterin phosphate + diphosphate. The protein operates within cofactor biosynthesis; molybdopterin biosynthesis. Functionally, catalyzes the conversion of (8S)-3',8-cyclo-7,8-dihydroguanosine 5'-triphosphate to cyclic pyranopterin monophosphate (cPMP). The sequence is that of Cyclic pyranopterin monophosphate synthase from Pasteurella multocida (strain Pm70).